A 140-amino-acid polypeptide reads, in one-letter code: Transcription antitermination protein NusB (140 aa).

It belongs to the NusB family.

Involved in transcription antitermination. Required for transcription of ribosomal RNA (rRNA) genes. Binds specifically to the boxA antiterminator sequence of the ribosomal RNA (rrn) operons. This Pseudothermotoga lettingae (strain ATCC BAA-301 / DSM 14385 / NBRC 107922 / TMO) (Thermotoga lettingae) protein is Transcription antitermination protein NusB.